A 621-amino-acid chain; its full sequence is F-box only protein 21 (621 aa).

The F-box domain maps to 28 to 77 (SCLVNLPGEVLEYILCCGSLTAADIGRVSSTCRRLRELCQSSGKVWKEQF).

In terms of assembly, interacts with SKP1 and CUL1.

Its function is as follows. Substrate-recognition component of the SCF (SKP1-CUL1-F-box protein)-type E3 ubiquitin ligase complex. The protein is F-box only protein 21 (FBXO21) of Pongo abelii (Sumatran orangutan).